The following is a 181-amino-acid chain: Regulator of G-protein signaling 10 (181 aa).

A disordered region spans residues 1 to 32 (MFNRAVSRLSRKRPPSDIHDSDGSSSSSHQSL). Residues 23 to 32 (GSSSSSHQSL) show a composition bias toward low complexity. Ser-24 and Ser-41 each carry phosphoserine. Positions 41-156 (SLENLLEDPE…LKSDLFLKHK (116 aa)) constitute an RGS domain. A lipid anchor (S-palmitoyl cysteine) is attached at Cys-74. The segment at 158–181 (TEEEEEDLPDAQTAAKRASRIYNT) is disordered. Phosphoserine is present on Ser-176.

Interacts with GNAZ, GNAI1 and GNAI3. Associates specifically with the activated, GTP-bound forms of GNAZ and GNAI3.

It localises to the cytoplasm. The protein resides in the cytosol. The protein localises to the nucleus. Functionally, regulates G protein-coupled receptor signaling cascades, including signaling downstream of the muscarinic acetylcholine receptor CHRM2. Inhibits signal transduction by increasing the GTPase activity of G protein alpha subunits, thereby driving them into their inactive GDP-bound form. Modulates the activity of potassium channels that are activated in response to CHRM2 signaling. Activity on GNAZ is inhibited by palmitoylation of the G-protein. The polypeptide is Regulator of G-protein signaling 10 (RGS10) (Homo sapiens (Human)).